The following is a 408-amino-acid chain: LL-diaminopimelate aminotransferase (408 aa).

Residues Tyr-15 and Gly-42 each contribute to the substrate site. Pyridoxal 5'-phosphate is bound by residues Tyr-72, 108-109 (SK), Tyr-132, Asn-187, Tyr-218, and 246-248 (SFS). Residues Lys-109, Tyr-132, and Asn-187 each contribute to the substrate site. At Lys-249 the chain carries N6-(pyridoxal phosphate)lysine. Arg-257 and Asn-292 together coordinate pyridoxal 5'-phosphate. Substrate is bound by residues Asn-292 and Arg-388.

Belongs to the class-I pyridoxal-phosphate-dependent aminotransferase family. LL-diaminopimelate aminotransferase subfamily. Homodimer. Pyridoxal 5'-phosphate is required as a cofactor.

The enzyme catalyses (2S,6S)-2,6-diaminopimelate + 2-oxoglutarate = (S)-2,3,4,5-tetrahydrodipicolinate + L-glutamate + H2O + H(+). It functions in the pathway amino-acid biosynthesis; L-lysine biosynthesis via DAP pathway; LL-2,6-diaminopimelate from (S)-tetrahydrodipicolinate (aminotransferase route): step 1/1. Its function is as follows. Involved in the synthesis of meso-diaminopimelate (m-DAP or DL-DAP), required for both lysine and peptidoglycan biosynthesis. Catalyzes the direct conversion of tetrahydrodipicolinate to LL-diaminopimelate. The sequence is that of LL-diaminopimelate aminotransferase from Prochlorococcus marinus subsp. pastoris (strain CCMP1986 / NIES-2087 / MED4).